Reading from the N-terminus, the 257-residue chain is Phosphatidylglycerol--prolipoprotein diacylglyceryl transferase (257 aa).

A run of 4 helical transmembrane segments spans residues 8-28 (IFGL…ILAY), 48-68 (VFIV…VIFN), 84-104 (EGGL…YLMS), and 109-129 (LNFL…QAIG). Arg-130 contributes to the a 1,2-diacyl-sn-glycero-3-phospho-(1'-sn-glycerol) binding site. The next 3 helical transmembrane spans lie at 169-189 (PTFL…LLIT), 196-216 (GSIF…IEGL), and 225-245 (SLRM…ILII).

The protein belongs to the Lgt family.

It is found in the cell membrane. It carries out the reaction L-cysteinyl-[prolipoprotein] + a 1,2-diacyl-sn-glycero-3-phospho-(1'-sn-glycerol) = an S-1,2-diacyl-sn-glyceryl-L-cysteinyl-[prolipoprotein] + sn-glycerol 1-phosphate + H(+). Its pathway is protein modification; lipoprotein biosynthesis (diacylglyceryl transfer). In terms of biological role, catalyzes the transfer of the diacylglyceryl group from phosphatidylglycerol to the sulfhydryl group of the N-terminal cysteine of a prolipoprotein, the first step in the formation of mature lipoproteins. The polypeptide is Phosphatidylglycerol--prolipoprotein diacylglyceryl transferase (Clostridium novyi (strain NT)).